Consider the following 374-residue polypeptide: Succinyl-diaminopimelate desuccinylase (374 aa).

Position 66 (H66) interacts with Zn(2+). D68 is a catalytic residue. Position 99 (D99) interacts with Zn(2+). E133 functions as the Proton acceptor in the catalytic mechanism. Zn(2+)-binding residues include E134, E162, and H348.

It belongs to the peptidase M20A family. DapE subfamily. Homodimer. The cofactor is Zn(2+). Co(2+) is required as a cofactor.

It carries out the reaction N-succinyl-(2S,6S)-2,6-diaminopimelate + H2O = (2S,6S)-2,6-diaminopimelate + succinate. It participates in amino-acid biosynthesis; L-lysine biosynthesis via DAP pathway; LL-2,6-diaminopimelate from (S)-tetrahydrodipicolinate (succinylase route): step 3/3. Functionally, catalyzes the hydrolysis of N-succinyl-L,L-diaminopimelic acid (SDAP), forming succinate and LL-2,6-diaminopimelate (DAP), an intermediate involved in the bacterial biosynthesis of lysine and meso-diaminopimelic acid, an essential component of bacterial cell walls. This chain is Succinyl-diaminopimelate desuccinylase, found in Coxiella burnetii (strain RSA 331 / Henzerling II).